A 365-amino-acid polypeptide reads, in one-letter code: NADH-quinone oxidoreductase subunit D (365 aa).

This sequence belongs to the complex I 49 kDa subunit family. In terms of assembly, NDH-1 is composed of 14 different subunits. Subunits NuoB, C, D, E, F, and G constitute the peripheral sector of the complex.

Its subcellular location is the cell membrane. The catalysed reaction is a quinone + NADH + 5 H(+)(in) = a quinol + NAD(+) + 4 H(+)(out). Its function is as follows. NDH-1 shuttles electrons from NADH, via FMN and iron-sulfur (Fe-S) centers, to quinones in the respiratory chain. The immediate electron acceptor for the enzyme in this species is believed to be a menaquinone. Couples the redox reaction to proton translocation (for every two electrons transferred, four hydrogen ions are translocated across the cytoplasmic membrane), and thus conserves the redox energy in a proton gradient. The chain is NADH-quinone oxidoreductase subunit D from Carboxydothermus hydrogenoformans (strain ATCC BAA-161 / DSM 6008 / Z-2901).